The chain runs to 336 residues: Phenylalanine--tRNA ligase alpha subunit (336 aa).

E263 lines the Mg(2+) pocket.

This sequence belongs to the class-II aminoacyl-tRNA synthetase family. Phe-tRNA synthetase alpha subunit type 1 subfamily. In terms of assembly, tetramer of two alpha and two beta subunits. It depends on Mg(2+) as a cofactor.

The protein localises to the cytoplasm. The catalysed reaction is tRNA(Phe) + L-phenylalanine + ATP = L-phenylalanyl-tRNA(Phe) + AMP + diphosphate + H(+). This chain is Phenylalanine--tRNA ligase alpha subunit, found in Thermosynechococcus vestitus (strain NIES-2133 / IAM M-273 / BP-1).